The primary structure comprises 494 residues: Glutamyl-tRNA(Gln) amidotransferase subunit A (494 aa).

Catalysis depends on charge relay system residues K81 and S156. Catalysis depends on S180, which acts as the Acyl-ester intermediate.

It belongs to the amidase family. GatA subfamily. As to quaternary structure, heterotrimer of A, B and C subunits.

It catalyses the reaction L-glutamyl-tRNA(Gln) + L-glutamine + ATP + H2O = L-glutaminyl-tRNA(Gln) + L-glutamate + ADP + phosphate + H(+). Its function is as follows. Allows the formation of correctly charged Gln-tRNA(Gln) through the transamidation of misacylated Glu-tRNA(Gln) in organisms which lack glutaminyl-tRNA synthetase. The reaction takes place in the presence of glutamine and ATP through an activated gamma-phospho-Glu-tRNA(Gln). In Mycobacterium tuberculosis (strain ATCC 25177 / H37Ra), this protein is Glutamyl-tRNA(Gln) amidotransferase subunit A.